A 635-amino-acid chain; its full sequence is Pheromone-processing carboxypeptidase KEX1 (635 aa).

The first 27 residues, 1-27, serve as a signal peptide directing secretion; the sequence is MGFSGSRAWSKWLTICLAITHPFSVTA. The Lumenal segment spans residues 28–514; sequence KSAADYYVHS…NTAAWKAYYK (487 aa). An N-linked (GlcNAc...) asparagine glycan is attached at Asn112. Catalysis depends on residues Ser179 and Asp381. Asn432 and Asn440 each carry an N-linked (GlcNAc...) asparagine glycan. Residue His443 is part of the active site. The interval 472–497 is disordered; that stretch reads PADSRIDGEKGPTTSVGAHPNSTAAA. A compositionally biased stretch (polar residues) spans 483–495; the sequence is PTTSVGAHPNSTA. Asn492 carries N-linked (GlcNAc...) asparagine glycosylation. The helical transmembrane segment at 515–535 threads the bilayer; it reads SGEVALVIVAIAAFAWGIFIW. Residues 536 to 635 lie on the Cytoplasmic side of the membrane; sequence RSRRKHQSSG…DQSRGEEGRS (100 aa). A disordered region spans residues 583–635; the sequence is TELDDQPSQAFLSRSSRDGDAYAVGEEGSDEEDGASDGQQPMFDQSRGEEGRS.

The protein belongs to the peptidase S10 family.

Its subcellular location is the golgi apparatus. It is found in the trans-Golgi network membrane. It carries out the reaction Preferential release of a C-terminal arginine or lysine residue.. Its function is as follows. Protease with a carboxypeptidase B-like function involved in the C-terminal processing of the lysine and arginine residues from protein precursors. Promotes cell fusion and is involved in the programmed cell death. The chain is Pheromone-processing carboxypeptidase KEX1 (KEX1) from Paracoccidioides brasiliensis (strain Pb18).